Reading from the N-terminus, the 692-residue chain is MISFSHWNSHIRSGLSLSMIPSANSRFAFIIQRNYIPVVNSQNTRWKRLCGTQSVWSPYKKKHVLVNRLKHISLFPKPIFARKFTTRQKSEDQKQWRILRITFLVLPFTVGGLWILYRVKNRKNNIFSFDELELEERSNRPRSIFGKIKQFFNILLRSFNLFIIFSPIIITLPFIALISFLHLRSLSSLTVSIWLRFLVTQLERAGATFIKLGQWAASRTDLFPPAFCKTLSKLHSHVTPHSLAYTQSVICKTYKVESIEEIFVNFNPIPIGVGAIAQVYTATIKKAATQQDNSYFTSMLQSIGFRQKNISDAPVTQDVAIKVLHPNVEKYISLDLQILGFFAKLINLVPSMKWLSLPDEVKVFGAMLNQQLNLHYEALHLNQFRLNFRGNRYVEFPAPYDDYTTNQILLEDYMPGIPLSAFLKHKSGPFNKLLANTGNNALFQMLIVDNFTHADLHPGNVLVKFYKGIPKTIFNQDNEINDSIYKILSTCSTEEWDSAMEELNILGYRPTLVFLDAGLVTKLSTQDQKNFLDLFQAVLTFHGYEAGLLMVERSRQTERVINKDIFALKMEHLLNEIQKSTLSLKSLQIGTILQEVMTMAREHHVRIEANFANTVLSILLVEGAGRQLYPEMDLLSNATPYLRSASSKSNVSLTNPMVQLWIALEARQFLLLSTSKETVEKWVKSDMIAPNI.

The transit peptide at 1–91 (MISFSHWNSH…RKFTTRQKSE (91 aa)) directs the protein to the mitochondrion. 2 helical membrane passes run 96 to 116 (WRILRITFLVLPFTVGGLWIL) and 161 to 181 (LFIIFSPIIITLPFIALISFL).

Belongs to the protein kinase superfamily. ADCK protein kinase family.

The protein resides in the mitochondrion membrane. This chain is ABC1 family protein C21C3.03, mitochondrial, found in Schizosaccharomyces pombe (strain 972 / ATCC 24843) (Fission yeast).